Consider the following 399-residue polypeptide: Glutathione S-transferase LANCL1 (399 aa).

N-acetylalanine is present on Ala2. The residue at position 142 (Lys142) is an N6-acetyllysine. Cys276 is a binding site for Zn(2+). Glutathione is bound at residue Lys317. Residues Cys322 and His323 each contribute to the Zn(2+) site. 364 to 367 is a glutathione binding site; that stretch reads RTPD.

It belongs to the LanC-like protein family. Interacts with the C-terminal of STOM. Interacts with the EPS8 SH3 domain. Interaction with EPS8 is inhibited by glutathione binding. As to quaternary structure, (Microbial infection) Interacts with P.falciparum SBP1. In terms of tissue distribution, detected in erythrocytes, brain, kidney, testis, ovary, heart, lung, placenta and spleen (at protein level). Ubiquitous. Strongly expressed in brain, spinal cord, pituitary gland, kidney, heart, skeletal muscle, pancreas, ovary and testis.

The protein localises to the cytoplasm. It is found in the cell membrane. The catalysed reaction is RX + glutathione = an S-substituted glutathione + a halide anion + H(+). It carries out the reaction 1-chloro-2,4-dinitrobenzene + glutathione = 2,4-dinitrophenyl-S-glutathione + chloride + H(+). Functionally, functions as a glutathione transferase. Catalyzes conjugation of the glutathione (GSH) to artificial substrates 1-chloro-2,4-dinitrobenzene (CDNB) and p-nitrophenyl acetate. Mitigates neuronal oxidative stress during normal postnatal development and in response to oxidative stresses probably through GSH antioxidant defense mechanism. May play a role in EPS8 signaling. Binds glutathione. The sequence is that of Glutathione S-transferase LANCL1 from Homo sapiens (Human).